The chain runs to 290 residues: S-methyl-5'-thioadenosine phosphorylase (290 aa).

Phosphate-binding positions include Ser-11, 53 to 54, and 86 to 87; these read RH and SA. Met-184 lines the substrate pocket. Thr-185 contacts phosphate. 208 to 210 provides a ligand contact to substrate; that stretch reads DYD.

Belongs to the PNP/MTAP phosphorylase family. MTAP subfamily. Homohexamer. Dimer of a homotrimer.

It catalyses the reaction S-methyl-5'-thioadenosine + phosphate = 5-(methylsulfanyl)-alpha-D-ribose 1-phosphate + adenine. Its pathway is amino-acid biosynthesis; L-methionine biosynthesis via salvage pathway; S-methyl-5-thio-alpha-D-ribose 1-phosphate from S-methyl-5'-thioadenosine (phosphorylase route): step 1/1. In terms of biological role, catalyzes the reversible phosphorylation of S-methyl-5'-thioadenosine (MTA) to adenine and 5-methylthioribose-1-phosphate. Involved in the breakdown of MTA, a major by-product of polyamine biosynthesis. Responsible for the first step in the methionine salvage pathway after MTA has been generated from S-adenosylmethionine. Has broad substrate specificity with 6-aminopurine nucleosides as preferred substrates. The protein is S-methyl-5'-thioadenosine phosphorylase of Cereibacter sphaeroides (strain ATCC 17023 / DSM 158 / JCM 6121 / CCUG 31486 / LMG 2827 / NBRC 12203 / NCIMB 8253 / ATH 2.4.1.) (Rhodobacter sphaeroides).